A 151-amino-acid polypeptide reads, in one-letter code: 3-hydroxyacyl-[acyl-carrier-protein] dehydratase FabZ (151 aa).

His57 is a catalytic residue.

Belongs to the thioester dehydratase family. FabZ subfamily.

Its subcellular location is the cytoplasm. The enzyme catalyses a (3R)-hydroxyacyl-[ACP] = a (2E)-enoyl-[ACP] + H2O. Its function is as follows. Involved in unsaturated fatty acids biosynthesis. Catalyzes the dehydration of short chain beta-hydroxyacyl-ACPs and long chain saturated and unsaturated beta-hydroxyacyl-ACPs. The chain is 3-hydroxyacyl-[acyl-carrier-protein] dehydratase FabZ from Prochlorococcus marinus (strain SARG / CCMP1375 / SS120).